A 140-amino-acid chain; its full sequence is Pro-variola growth factor (140 aa).

The first 18 residues, 1-18 (MSMKYLMLLFAAMIIRSF), serve as a signal peptide directing secretion. The Extracellular segment spans residues 19-100 (ANSGNAIETT…SEKPNTTTSY (82 aa)). N-linked (GlcNAc...) asparagine; by host glycosylation occurs at asparagine 34. In terms of domain architecture, EGF-like spans 41–81 (AIRLCGPEGDRYCFHGICIHARDIDGMYCRCSHGYTGIRCQ). Cystine bridges form between cysteine 45/cysteine 58, cysteine 53/cysteine 69, and cysteine 71/cysteine 80. A glycan (N-linked (GlcNAc...) asparagine; by host) is linked at asparagine 95. Residues 101–121 (IPSPGIVLVLLVSIIVCCLLF) traverse the membrane as a helical segment. Residues 122–140 (VYRFTRRTNKLPLQDMVVP) lie on the Cytoplasmic side of the membrane.

The protein belongs to the orthopoxvirus OPG019 family. As to quaternary structure, variola growth factor interacts with host EGFR and promotes EGFR dimerization.

Its subcellular location is the host membrane. It is found in the secreted. Functionally, stimulates cellular proliferation (hyperplasia)and mobility around infected cells to promote rapid and efficient spread of infection. This effect is beneficial for virus replication in vivo, because poxviruses replicate possibly better in proliferating cells than in quiescent cells. Acts by binding host EGFR, inducing its dimerization, autophosphorylation and leading to activation of several cellular pathways regulating cell proliferation or cell survival. The activation by host EGFR of mitogen activated protein kinases (MAPK) and extracellular-signal regulated kinases (ERK) are essential for the positive effect of vaccinia growth factor on poxvirus virulence in vivo. The chain is Pro-variola growth factor (OPG019) from Variola virus (isolate Human/India/Ind3/1967) (VARV).